We begin with the raw amino-acid sequence, 401 residues long: Riboflavin biosynthesis protein RibBA (401 aa).

The interval 1-203 (MTDFQFSKVE…IQQLQEYRRK (203 aa)) is DHBP synthase. Residues 30–31 (RE), aspartate 35, 142–146 (RNGHT), and glutamate 166 each bind D-ribulose 5-phosphate. Glutamate 31 provides a ligand contact to Mg(2+). Histidine 145 serves as a coordination point for Mg(2+). The GTP cyclohydrolase II stretch occupies residues 204–401 (HDSLVKQISV…QIKMGHMFNF (198 aa)). 254 to 258 (RIHSE) serves as a coordination point for GTP. Cysteine 259, cysteine 270, and cysteine 272 together coordinate Zn(2+). GTP contacts are provided by residues glutamine 275, 297-299 (EGR), and threonine 319. The active-site Proton acceptor; for GTP cyclohydrolase activity is the aspartate 331. Arginine 333 functions as the Nucleophile; for GTP cyclohydrolase activity in the catalytic mechanism. GTP contacts are provided by threonine 354 and lysine 359.

In the N-terminal section; belongs to the DHBP synthase family. This sequence in the C-terminal section; belongs to the GTP cyclohydrolase II family. Mg(2+) serves as cofactor. The cofactor is Mn(2+). Zn(2+) is required as a cofactor.

The catalysed reaction is D-ribulose 5-phosphate = (2S)-2-hydroxy-3-oxobutyl phosphate + formate + H(+). It catalyses the reaction GTP + 4 H2O = 2,5-diamino-6-hydroxy-4-(5-phosphoribosylamino)-pyrimidine + formate + 2 phosphate + 3 H(+). It functions in the pathway cofactor biosynthesis; riboflavin biosynthesis; 2-hydroxy-3-oxobutyl phosphate from D-ribulose 5-phosphate: step 1/1. It participates in cofactor biosynthesis; riboflavin biosynthesis; 5-amino-6-(D-ribitylamino)uracil from GTP: step 1/4. Its function is as follows. Catalyzes the conversion of D-ribulose 5-phosphate to formate and 3,4-dihydroxy-2-butanone 4-phosphate. Catalyzes the conversion of GTP to 2,5-diamino-6-ribosylamino-4(3H)-pyrimidinone 5'-phosphate (DARP), formate and pyrophosphate. This Actinobacillus pleuropneumoniae serotype 7 (strain AP76) protein is Riboflavin biosynthesis protein RibBA.